Here is a 258-residue protein sequence, read N- to C-terminus: UPF0246 protein YE0603 (258 aa).

The protein belongs to the UPF0246 family.

This is UPF0246 protein YE0603 from Yersinia enterocolitica serotype O:8 / biotype 1B (strain NCTC 13174 / 8081).